Here is a 290-residue protein sequence, read N- to C-terminus: Nucleotide-binding protein XF_1405 (290 aa).

Residue 13-20 (GLSGSGKS) participates in ATP binding. Residue 65–68 (DIRS) participates in GTP binding.

This sequence belongs to the RapZ-like family.

In terms of biological role, displays ATPase and GTPase activities. In Xylella fastidiosa (strain 9a5c), this protein is Nucleotide-binding protein XF_1405.